A 471-amino-acid chain; its full sequence is Type 2 glycosyltransferase (471 aa).

The helical transmembrane segment at 4–24 (ILGWFWAFVSAFVLRYLRTIV) threads the bilayer. Asparagine 29, asparagine 88, and asparagine 222 each carry an N-linked (GlcNAc...) asparagine glycan. 3 helical membrane passes run 305–325 (CLQTTITAWALPWDAFLFYSL), 339–359 (MAFTLLFLWIFGFTKNVKLWG), and 368–388 (VIYIPVHIAFGYFHGLIKFWG). N-linked (GlcNAc...) asparagine glycosylation occurs at asparagine 458.

The protein belongs to the GT2 glycosyltransferase family.

Its subcellular location is the cell membrane. Functionally, glycosyltransferase involved in the maintenance of the outermost surface of the fungal cell wall. Likely functions in the synthesis of a currently unknown, potentially minor but widespread, extracellular or outer cell wall polysaccharide which plays a key role in facilitating many interactions between plants and fungi by enabling hyphal growth on solid matrices. This Zymoseptoria tritici (strain CBS 115943 / IPO323) (Speckled leaf blotch fungus) protein is Type 2 glycosyltransferase.